We begin with the raw amino-acid sequence, 171 residues long: Moubatin (171 aa).

The signal sequence occupies residues 1-15; sequence MMLVLTTLIFSFSAS. 3 cysteine pairs are disulfide-bonded: cysteine 23–cysteine 144, cysteine 55–cysteine 166, and cysteine 118–cysteine 145.

The protein belongs to the calycin superfamily. Lipocalin family. Post-translationally, the N-terminus is blocked. Expressed in salivary glands.

It is found in the secreted. Functionally, tick salivary platelet aggregation inhibitor that plays an important part in the anti-hemostatic strategy of ticks. Acts by scavenging thromboxane A2 (TXA2), a potent inducer of platelet aggregation and blood vessel constriction. As a consequence, is a specific inhibitor of collagen-induced platelet aggregation. In addition, it also acts as a potent inhibitor of TXA2-mediated vasoconstriction. Has also been found to bind leukotriene B4 (LTB4) (which also derives from arachidonic acid, as TXA2) with affinities in the nanomolar range. It does not interact with complement protein C5. The chain is Moubatin from Ornithodoros moubata (Soft tick).